A 94-amino-acid chain; its full sequence is Cell division topological specificity factor (94 aa).

It belongs to the MinE family.

In terms of biological role, prevents the cell division inhibition by proteins MinC and MinD at internal division sites while permitting inhibition at polar sites. This ensures cell division at the proper site by restricting the formation of a division septum at the midpoint of the long axis of the cell. This is Cell division topological specificity factor from Acetivibrio thermocellus (strain ATCC 27405 / DSM 1237 / JCM 9322 / NBRC 103400 / NCIMB 10682 / NRRL B-4536 / VPI 7372) (Clostridium thermocellum).